Consider the following 70-residue polypeptide: Mu-agatoxin-Ao1b (70 aa).

The first 20 residues, 1–20 (MKAIIFFCFLSVMVFIVAEA), serve as a signal peptide directing secretion. Residues 21-33 (SSLEALKIFEGER) constitute a propeptide that is removed on maturation. Cystine bridges form between C35-C50, C42-C55, C49-C65, and C57-C63. N69 bears the Asparagine amide mark.

Belongs to the neurotoxin 07 (Beta/delta-agtx) family. 04 (aga-5) subfamily. As to expression, expressed by the venom gland.

It is found in the secreted. In terms of biological role, insecticidal neurotoxin that modulates the insect Nav channel (DmNaV1/tipE (para/tipE)) in a unique manner, with both the activation and inactivation processes being affected. The voltage dependence of activation is shifted toward more hyperpolarized potentials (analogous to site 4 toxins) and a non-inactivating persistent sodium current is induced (site 3-like action). Interestingly, both effects take place in a voltage-dependent manner, producing a bell-shaped curve between -80 and 0 mV. This chain is Mu-agatoxin-Ao1b, found in Agelena orientalis (Funnel-web spider).